The following is a 1043-amino-acid chain: Sucrose-phosphate synthase 1 (1043 aa).

A compositionally biased stretch (basic and acidic residues) spans 95-117; the sequence is EEKEAQRLAKRRLEREKGRREAT. The tract at residues 95-127 is disordered; sequence EEKEAQRLAKRRLEREKGRREATADMSEEFSEG. Phosphoserine occurs at positions 121, 125, 152, and 155. Residues 670–693 are disordered; sequence PRHPQWQSDDGGDNSEPESPSDSL.

This sequence belongs to the glycosyltransferase 1 family. In terms of assembly, homodimer or homotetramer. Post-translationally, phosphorylated at Ser-152 upon sucrose supply. Expressed in seeds, stems, rosette leaves, flowers and siliques. Highly expressed in maturing nectaries.

It carries out the reaction beta-D-fructose 6-phosphate + UDP-alpha-D-glucose = sucrose 6(F)-phosphate + UDP + H(+). It functions in the pathway glycan biosynthesis; sucrose biosynthesis; sucrose from D-fructose 6-phosphate and UDP-alpha-D-glucose: step 1/2. Activity is regulated by phosphorylation and moderated by concentration of metabolites and light. Its function is as follows. Plays a major role in photosynthetic sucrose synthesis by catalyzing the rate-limiting step of sucrose biosynthesis from UDP-glucose and fructose- 6-phosphate. Involved in the regulation of carbon partitioning in the leaves of plants. May regulate the synthesis of sucrose and therefore play a major role as a limiting factor in the export of photoassimilates out of the leaf. Plays a role for sucrose availability that is essential for plant growth and fiber elongation. Required for nectar secretion. This Arabidopsis thaliana (Mouse-ear cress) protein is Sucrose-phosphate synthase 1 (SPS1).